Reading from the N-terminus, the 140-residue chain is Sec-independent protein translocase protein TatB (140 aa).

A helical membrane pass occupies residues 2 to 22 (LPGIGFSELLLIGLAALIIIG). Positions 90–140 (VNSAVMREHPVSPPPPATPPAPPAELPPEAAPHADSQNAPPEADPAKGDRT) are disordered. Positions 100 to 119 (VSPPPPATPPAPPAELPPEA) are enriched in pro residues.

The protein belongs to the TatB family. In terms of assembly, the Tat system comprises two distinct complexes: a TatABC complex, containing multiple copies of TatA, TatB and TatC subunits, and a separate TatA complex, containing only TatA subunits. Substrates initially bind to the TatABC complex, which probably triggers association of the separate TatA complex to form the active translocon.

The protein resides in the cell inner membrane. Part of the twin-arginine translocation (Tat) system that transports large folded proteins containing a characteristic twin-arginine motif in their signal peptide across membranes. Together with TatC, TatB is part of a receptor directly interacting with Tat signal peptides. TatB may form an oligomeric binding site that transiently accommodates folded Tat precursor proteins before their translocation. This Hyphomonas neptunium (strain ATCC 15444) protein is Sec-independent protein translocase protein TatB.